Here is a 314-residue protein sequence, read N- to C-terminus: Endo-beta-N-acetylglucosaminidase (314 aa).

Residues 1–47 (MQFGIVAAIADGGRTARAGGSVRPPRRPPASHTAWGLPRGRPTGQPH) form the signal peptide. The interval 14–54 (RTARAGGSVRPPRRPPASHTAWGLPRGRPTGQPHATPTKSG) is disordered. Residues 55 to 309 (PTSIAYVEVN…SSMTKVLYGQ (255 aa)) form the GH18 domain. The active-site Proton donor is the glutamate 175.

The protein belongs to the glycosyl hydrolase 18 family. In terms of assembly, monomer.

The protein localises to the secreted. It carries out the reaction an N(4)-(oligosaccharide-(1-&gt;3)-[oligosaccharide-(1-&gt;6)]-beta-D-Man-(1-&gt;4)-beta-D-GlcNAc-(1-&gt;4)-alpha-D-GlcNAc)-L-asparaginyl-[protein] + H2O = an oligosaccharide-(1-&gt;3)-[oligosaccharide-(1-&gt;6)]-beta-D-Man-(1-&gt;4)-D-GlcNAc + N(4)-(N-acetyl-beta-D-glucosaminyl)-L-asparaginyl-[protein]. Cleaves asparagine-linked oligomannose and hybrid, but not complex, oligosaccharides from glycoproteins. The sequence is that of Endo-beta-N-acetylglucosaminidase from Flavobacterium sp. (strain SK1022).